Reading from the N-terminus, the 130-residue chain is uncharacterized protein (130 aa).

Residues 21–43 form a helical membrane-spanning segment; the sequence is VAVCTVAAEVLAIFTLVCTRVFI.

The protein resides in the membrane. This is an uncharacterized protein from Saccharomyces cerevisiae (strain ATCC 204508 / S288c) (Baker's yeast).